A 325-amino-acid polypeptide reads, in one-letter code: Beta-ketoacyl-[acyl-carrier-protein] synthase III (325 aa).

Residues Cys-113 and His-250 contribute to the active site. Residues 251–255 (QANIR) are ACP-binding. Residue Asn-280 is part of the active site.

It belongs to the thiolase-like superfamily. FabH family. Homodimer.

It is found in the cytoplasm. The enzyme catalyses malonyl-[ACP] + acetyl-CoA + H(+) = 3-oxobutanoyl-[ACP] + CO2 + CoA. It functions in the pathway lipid metabolism; fatty acid biosynthesis. Functionally, catalyzes the condensation reaction of fatty acid synthesis by the addition to an acyl acceptor of two carbons from malonyl-ACP. Catalyzes the first condensation reaction which initiates fatty acid synthesis and may therefore play a role in governing the total rate of fatty acid production. Possesses both acetoacetyl-ACP synthase and acetyl transacylase activities. Its substrate specificity determines the biosynthesis of branched-chain and/or straight-chain of fatty acids. The chain is Beta-ketoacyl-[acyl-carrier-protein] synthase III from Streptococcus suis (strain 98HAH33).